Here is a 380-residue protein sequence, read N- to C-terminus: 4-hydroxy-3-methylbut-2-en-1-yl diphosphate synthase (flavodoxin) (380 aa).

Positions 280, 283, 315, and 322 each coordinate [4Fe-4S] cluster.

It belongs to the IspG family. The cofactor is [4Fe-4S] cluster.

It catalyses the reaction (2E)-4-hydroxy-3-methylbut-2-enyl diphosphate + oxidized [flavodoxin] + H2O + 2 H(+) = 2-C-methyl-D-erythritol 2,4-cyclic diphosphate + reduced [flavodoxin]. It participates in isoprenoid biosynthesis; isopentenyl diphosphate biosynthesis via DXP pathway; isopentenyl diphosphate from 1-deoxy-D-xylulose 5-phosphate: step 5/6. In terms of biological role, converts 2C-methyl-D-erythritol 2,4-cyclodiphosphate (ME-2,4cPP) into 1-hydroxy-2-methyl-2-(E)-butenyl 4-diphosphate. In Cutibacterium acnes (strain DSM 16379 / KPA171202) (Propionibacterium acnes), this protein is 4-hydroxy-3-methylbut-2-en-1-yl diphosphate synthase (flavodoxin).